The following is a 141-amino-acid chain: Small ribosomal subunit protein uS12 (141 aa).

Belongs to the universal ribosomal protein uS12 family. In terms of assembly, part of the 30S ribosomal subunit.

With S4 and S5 plays an important role in translational accuracy. Located at the interface of the 30S and 50S subunits. The protein is Small ribosomal subunit protein uS12 of Methanobrevibacter smithii (strain ATCC 35061 / DSM 861 / OCM 144 / PS).